A 1057-amino-acid chain; its full sequence is Carbamoyl phosphate synthase large chain (1057 aa).

The carboxyphosphate synthetic domain stretch occupies residues 1 to 401; sequence MPKRDDIQTI…SLLKAIRSLE (401 aa). Positions 129, 169, 175, 176, 208, 210, 215, 241, 242, 243, 284, and 298 each coordinate ATP. Residues 133 to 327 enclose the ATP-grasp 1 domain; it reads RTLMNDLNVP…IAKLAAKIAV (195 aa). 3 residues coordinate Mg(2+): Q284, E298, and N300. Residues Q284, E298, and N300 each coordinate Mn(2+). Residues 402–546 form an oligomerization domain region; sequence YGVHHLGLPN…YGTYEDENES (145 aa). The tract at residues 547 to 929 is carbamoyl phosphate synthetic domain; sequence IVTDKEKILV…ALYKGLTGSG (383 aa). The 191-residue stretch at 671–861 folds into the ATP-grasp 2 domain; the sequence is EALLREISVP…MAQLAMRAIM (191 aa). 10 residues coordinate ATP: R707, R746, L748, E752, G777, V778, H779, S780, Q820, and E832. Mg(2+) is bound by residues Q820, E832, and N834. Mn(2+)-binding residues include Q820, E832, and N834. Positions 930 to 1057 constitute an MGS-like domain; the sequence is FEVKDHGTVL…ESMTFTMRNV (128 aa). Positions 930-1057 are allosteric domain; sequence FEVKDHGTVL…ESMTFTMRNV (128 aa).

This sequence belongs to the CarB family. Composed of two chains; the small (or glutamine) chain promotes the hydrolysis of glutamine to ammonia, which is used by the large (or ammonia) chain to synthesize carbamoyl phosphate. Tetramer of heterodimers (alpha,beta)4. Requires Mg(2+) as cofactor. Mn(2+) is required as a cofactor.

It carries out the reaction hydrogencarbonate + L-glutamine + 2 ATP + H2O = carbamoyl phosphate + L-glutamate + 2 ADP + phosphate + 2 H(+). The catalysed reaction is hydrogencarbonate + NH4(+) + 2 ATP = carbamoyl phosphate + 2 ADP + phosphate + 2 H(+). It participates in amino-acid biosynthesis; L-arginine biosynthesis; carbamoyl phosphate from bicarbonate: step 1/1. It functions in the pathway pyrimidine metabolism; UMP biosynthesis via de novo pathway; (S)-dihydroorotate from bicarbonate: step 1/3. In terms of biological role, large subunit of the glutamine-dependent carbamoyl phosphate synthetase (CPSase). CPSase catalyzes the formation of carbamoyl phosphate from the ammonia moiety of glutamine, carbonate, and phosphate donated by ATP, constituting the first step of 2 biosynthetic pathways, one leading to arginine and/or urea and the other to pyrimidine nucleotides. The large subunit (synthetase) binds the substrates ammonia (free or transferred from glutamine from the small subunit), hydrogencarbonate and ATP and carries out an ATP-coupled ligase reaction, activating hydrogencarbonate by forming carboxy phosphate which reacts with ammonia to form carbamoyl phosphate. The polypeptide is Carbamoyl phosphate synthase large chain (Staphylococcus epidermidis (strain ATCC 35984 / DSM 28319 / BCRC 17069 / CCUG 31568 / BM 3577 / RP62A)).